Reading from the N-terminus, the 220-residue chain is Cytidylate kinase (220 aa).

10–18 (GPASSGKST) is a binding site for ATP.

Belongs to the cytidylate kinase family. Type 1 subfamily.

It is found in the cytoplasm. The catalysed reaction is CMP + ATP = CDP + ADP. It carries out the reaction dCMP + ATP = dCDP + ADP. This Lactococcus lactis subsp. cremoris (strain SK11) protein is Cytidylate kinase.